Consider the following 331-residue polypeptide: Type II secretion system protein K (331 aa).

A propeptide spans 1–9 (leader sequence); the sequence is MPSCRRQGG. A helical membrane pass occupies residues 8 to 27; that stretch reads GGMALLVVLLILSVMVIIAS. The Periplasmic portion of the chain corresponds to 28–331; the sequence is NMSGRLQLEL…MLRRLNGGAE (304 aa).

This sequence belongs to the GSP K family. Type II secretion is composed of four main components: the outer membrane complex, the inner membrane complex, the cytoplasmic secretion ATPase and the periplasm-spanning pseudopilus. Interacts with core component ExeG. In terms of processing, cleaved by prepilin peptidase.

It localises to the cell inner membrane. Functionally, component of the type II secretion system required for the energy-dependent secretion of extracellular factors such as proteases and toxins from the periplasm. Plays a role in pseudopilus assembly and seems to control its length. Interacts with the pseudopilus tip complex that is critical for the recognition and binding of secretion substrates. In Aeromonas hydrophila, this protein is Type II secretion system protein K (exeK).